The chain runs to 839 residues: ABC transporter A family member 7 (839 aa).

7 helical membrane passes run 30–50 (GVQI…KLWI), 238–258 (IASL…LPLF), 286–306 (IMTF…ISLI), 321–341 (FALF…AFFL), 352–372 (SIFG…LSLF), 378–398 (VFYY…LCGL), and 419–439 (ILFW…YLDK). The 232-residue stretch at 525–756 (LIVQGLRKQF…FGDGYSVRID (232 aa)) folds into the ABC transporter domain. 559–566 (GPNGAGKT) provides a ligand contact to ATP.

This sequence belongs to the ABC transporter superfamily. ABCA family.

The protein localises to the membrane. The polypeptide is ABC transporter A family member 7 (abcA7) (Dictyostelium discoideum (Social amoeba)).